Consider the following 452-residue polypeptide: MVMDIWTISLRILLFPSALVLCSDSFHSECYTVNGADYRGTQNQTSLDGGKPCLFWNETFQHPYNTLKYPNGEGGLGEHNYCRNPDGDVSPWCYIPEQEDGVYWKYCDIPACKMPGNLGCFRDHGNPPPLTGISETSNKQTIQTCITMCRRQRYKLAGLEAGFACFCGNNADYRKHGEMPSTDCNSVCFGDHTQPCGGDGRIILFDSLIGACGGNYSTDSAVIYSPDFPDTYGTGKACYWTIQVTDASIIRFNFTLFDIKDSRDMVELLDGYTKQVLIRFDGRNHPTHSFNISLDFVILYFFSDRINQAQGFSVVYEAFKEETIEKPNGSNNPSQTEMITQTTNLSINAARSSKILYVITTSPSRPSGHVPGWTIYALTGLLILTIIAISAKALLHISMKSARLASSSSLDSCHRGSAGEIWSIFYKPSTSISIFPKKLKGQHDDRNPLVGE.

The signal sequence occupies residues 1–22 (MVMDIWTISLRILLFPSALVLC). Topologically, residues 23 to 369 (SDSFHSECYT…TTSPSRPSGH (347 aa)) are extracellular. The Kringle domain occupies 29-112 (ECYTVNGADY…YWKYCDIPAC (84 aa)). 8 cysteine pairs are disulfide-bonded: C30–C112, C53–C93, C82–C107, C120–C184, C145–C165, C149–C167, C188–C196, and C212–C238. N-linked (GlcNAc...) asparagine glycosylation is found at N43 and N57. One can recognise a WSC domain in the interval 114–208 (MPGNLGCFRD…DGRIILFDSL (95 aa)). The CUB domain occupies 212-319 (CGGNYSTDSA…QGFSVVYEAF (108 aa)). Residues N215, N253, N291, N328, and N344 are each glycosylated (N-linked (GlcNAc...) asparagine). A helical transmembrane segment spans residues 370–390 (VPGWTIYALTGLLILTIIAIS). At 391 to 452 (AKALLHISMK…HDDRNPLVGE (62 aa)) the chain is on the cytoplasmic side.

As to quaternary structure, interacts with lrp6.

Its subcellular location is the cell membrane. In terms of biological role, receptor for Dickkopf proteins. Cooperates with DKK1/2 proteins to inhibit Wnt/beta-catenin signaling by promoting the endocytosis of Wnt receptors LRP5 and LRP6. In the absence of DKK1, potentiates Wnt-beta-catenin signaling by maintaining LRP5 or LRP6 at the cell membrane. The chain is Kremen protein 1 (kremen1) from Xenopus laevis (African clawed frog).